We begin with the raw amino-acid sequence, 260 residues long: Troponin I 3 (260 aa).

Positions 192–219 are enriched in basic and acidic residues; sequence DLDEIMAKKKGTADGKPEWSKKEKKEEE. The interval 192–260 is disordered; that stretch reads DLDEIMAKKK…EEEEEEEEEE (69 aa). Over residues 231–260 the composition is skewed to acidic residues; sequence PEAEPEPEAAEPAAEEPEAEEEEEEEEEEE.

Belongs to the troponin I family. As to expression, expressed in body wall muscle from first larval stage to adult. In adults expression is predominantly in vulval and anal muscles, body wall muscle expression is weaker. Also expressed in vulval muscles of hermaphrodites and the sex muscles of males.

Its function is as follows. Troponin I is the inhibitory subunit of troponin, the thin filament regulatory complex which confers calcium-sensitivity to muscle actomyosin ATPase activity. The polypeptide is Troponin I 3 (tni-3) (Caenorhabditis elegans).